The primary structure comprises 390 residues: Putative 2-isopropylmalate synthase (390 aa).

The Pyruvate carboxyltransferase domain occupies 5-267; it reads IIIFDTTLRD…KTNIKYQEIY (263 aa). Residues aspartate 14, histidine 202, histidine 204, and asparagine 238 each contribute to the Mn(2+) site.

Belongs to the alpha-IPM synthase/homocitrate synthase family. LeuA type 1 subfamily. In terms of assembly, homodimer. The cofactor is Mn(2+).

Its subcellular location is the cytoplasm. The catalysed reaction is 3-methyl-2-oxobutanoate + acetyl-CoA + H2O = (2S)-2-isopropylmalate + CoA + H(+). It functions in the pathway amino-acid biosynthesis; L-leucine biosynthesis; L-leucine from 3-methyl-2-oxobutanoate: step 1/4. Catalyzes the condensation of the acetyl group of acetyl-CoA with 3-methyl-2-oxobutanoate (2-ketoisovalerate) to form 3-carboxy-3-hydroxy-4-methylpentanoate (2-isopropylmalate). This is Putative 2-isopropylmalate synthase from Buchnera aphidicola subsp. Baizongia pistaciae (strain Bp).